The chain runs to 507 residues: MLLDELVRTTDAVASTRSRLAKVDALAQLLKRLDPADIPAAVGLLTAKPRQGRVGVGWRGMSAAMGEPAADPGLTLADLDAALDRLQALAGAGSAAERAATLRGLTAAATEREQAFIGGVLLGELRTGALEGVLTDAVARAAERSVEAVRRAAMLSGDLGSTALLALTGTAAELDAVGLKVGRPVQPMLAGTGASVTAALETTGEASVEYKLDGARIQVHRSGGDVRIFTRTLAEVTHRLPEVVEVVRGFPVHDVILDGETLALGEDGAPRPFQETMSRFGADAARTTVLHPWFFDVLHIDGRDLLDEPLSERIKVLEAIAPAHRIPGEITADPEVAGRISRDALAAGHEGVMLKSVGSLYAAGRRGSNWIKVKPVLTYDLVVLACEWGSGRRTGMLSNLHLGALDPAGEYGEPGGYVMVGKTFKGLTDALLQWQTKRFQEIEVRRTAGTVWVEPVTVVEIAIDGVQQSPRYPGRIALRFARVKGYREDKTAAEADTIQTLRALLRP.

Glu-209 lines the ATP pocket. Lys-211 acts as the N6-AMP-lysine intermediate in catalysis. 6 residues coordinate ATP: Arg-216, Arg-231, Glu-260, Phe-295, Arg-366, and Lys-372.

Belongs to the ATP-dependent DNA ligase family. Mg(2+) serves as cofactor.

It carries out the reaction ATP + (deoxyribonucleotide)n-3'-hydroxyl + 5'-phospho-(deoxyribonucleotide)m = (deoxyribonucleotide)n+m + AMP + diphosphate.. DNA ligase that seals nicks in double-stranded DNA during DNA replication, DNA recombination and DNA repair. The chain is Probable DNA ligase from Pseudarthrobacter chlorophenolicus (strain ATCC 700700 / DSM 12829 / CIP 107037 / JCM 12360 / KCTC 9906 / NCIMB 13794 / A6) (Arthrobacter chlorophenolicus).